Here is a 367-residue protein sequence, read N- to C-terminus: tRNA-specific 2-thiouridylase MnmA (367 aa).

Residues 11-18 (GLSGGVDS) and Leu-37 contribute to the ATP site. The active-site Nucleophile is Cys-99. Cys-99 and Cys-195 are oxidised to a cystine. Residue Gly-123 coordinates ATP. The interaction with tRNA stretch occupies residues 145–147 (KDQ). The active-site Cysteine persulfide intermediate is the Cys-195. The segment at 304 to 305 (RY) is interaction with tRNA.

It belongs to the MnmA/TRMU family.

It localises to the cytoplasm. It carries out the reaction S-sulfanyl-L-cysteinyl-[protein] + uridine(34) in tRNA + AH2 + ATP = 2-thiouridine(34) in tRNA + L-cysteinyl-[protein] + A + AMP + diphosphate + H(+). Its function is as follows. Catalyzes the 2-thiolation of uridine at the wobble position (U34) of tRNA, leading to the formation of s(2)U34. The chain is tRNA-specific 2-thiouridylase MnmA from Chlorobium luteolum (strain DSM 273 / BCRC 81028 / 2530) (Pelodictyon luteolum).